The following is an 804-amino-acid chain: Probable exo-1,4-beta-xylosidase xlnD (804 aa).

The first 17 residues, 1 to 17, serve as a signal peptide directing secretion; it reads MAVAALALLALLPQALG. N-linked (GlcNAc...) asparagine glycans are attached at residues asparagine 20, asparagine 115, asparagine 139, asparagine 234, and asparagine 243. Residue aspartate 307 is part of the active site. Asparagine 349, asparagine 382, asparagine 404, asparagine 433, asparagine 444, asparagine 485, asparagine 489, asparagine 621, asparagine 652, asparagine 666, asparagine 688, and asparagine 710 each carry an N-linked (GlcNAc...) asparagine glycan.

This sequence belongs to the glycosyl hydrolase 3 family.

The protein resides in the secreted. It catalyses the reaction Hydrolysis of (1-&gt;4)-beta-D-xylans, to remove successive D-xylose residues from the non-reducing termini.. The protein operates within glycan degradation; xylan degradation. Its function is as follows. Xylan 1,4-beta-xylosidase involved in the hydrolysis of xylan, a major structural heterogeneous polysaccharide found in plant biomass representing the second most abundant polysaccharide in the biosphere, after cellulose. The protein is Probable exo-1,4-beta-xylosidase xlnD (xlnD) of Aspergillus japonicus.